Reading from the N-terminus, the 463-residue chain is Toxin CaTX-A (463 aa).

Positions 1–18 are cleaved as a signal peptide; that stretch reads MSRGYSLHLVLFLVLSTA.

It belongs to the jellyfish toxin family. Type II subfamily. Oligomer. In terms of processing, contains disulfide bonds. As to expression, it is suggested that CaTX-B is synthesized in the tentacle, is modified (become CaTX-A) and then migrates to the nematocyst.

It localises to the secreted. Its subcellular location is the nematocyst. It is found in the target cell membrane. Has potent hemolytic activity. Is lethal to crayfish. Causes cutaneous inflammation in humans. May act as a pore-forming toxin, disrupting normal transmembrane ion concentration gradients in susceptible cells. This is Toxin CaTX-A from Carybdea alata (Hawaiian box jellyfish).